We begin with the raw amino-acid sequence, 381 residues long: DnaJ-related protein spj1 (381 aa).

Residues 5-74 (NFSQKQILGV…RKIYDAYGEE (70 aa)) enclose the J domain. The interval 72 to 93 (GEEGLNGQPGGPGGGPGEGFPG) is disordered. The segment covering 78-93 (GQPGGPGGGPGEGFPG) has biased composition (gly residues). The CR-type zinc-finger motif lies at 138 to 225 (GGSFTLEIPV…CKGERVAEVV (88 aa)). CXXCXGXG motif repeat units lie at residues 151–158 (CSVCSGQG), 172–179 (CPVCGGSG), 199–206 (CNACNGNG), and 213–220 (CPRCKGER). Residues 378–381 (FDEL) carry the Prevents secretion from ER motif.

Its subcellular location is the endoplasmic reticulum. In Schizosaccharomyces pombe (strain 972 / ATCC 24843) (Fission yeast), this protein is DnaJ-related protein spj1 (spj1).